Consider the following 829-residue polypeptide: Periplasmic nitrate reductase (829 aa).

The tat-type signal signal peptide spans 1-29; the sequence is MKMTRRAFVKANAAASAAAVAGITLPASA. The 57-residue stretch at 41-97 folds into the 4Fe-4S Mo/W bis-MGD-type domain; the sequence is ITWDKAPCRFCGTGCSVLVGTQNGKVVATQGDPEAPVNKGLNCIKGYFLSKIMYGQD. [4Fe-4S] cluster-binding residues include cysteine 48, cysteine 51, cysteine 55, and cysteine 83. Mo-bis(molybdopterin guanine dinucleotide)-binding positions include lysine 85, glutamine 152, asparagine 177, cysteine 181, 214–221, 245–249, 264–266, methionine 374, glutamine 378, asparagine 484, 510–511, lysine 533, aspartate 560, and 718–727; these read WGSNMAEM, STYYH, QSD, SD, and TGRVLEHWHT. Phenylalanine 794 lines the substrate pocket. Mo-bis(molybdopterin guanine dinucleotide)-binding residues include asparagine 802 and lysine 819.

It belongs to the prokaryotic molybdopterin-containing oxidoreductase family. NasA/NapA/NarB subfamily. In terms of assembly, component of the periplasmic nitrate reductase NapAB complex composed of NapA and NapB. [4Fe-4S] cluster is required as a cofactor. Mo-bis(molybdopterin guanine dinucleotide) serves as cofactor. In terms of processing, predicted to be exported by the Tat system. The position of the signal peptide cleavage has not been experimentally proven.

The protein localises to the periplasm. The catalysed reaction is 2 Fe(II)-[cytochrome] + nitrate + 2 H(+) = 2 Fe(III)-[cytochrome] + nitrite + H2O. Catalytic subunit of the periplasmic nitrate reductase complex NapAB. Receives electrons from NapB and catalyzes the reduction of nitrate to nitrite. The protein is Periplasmic nitrate reductase of Vibrio campbellii (strain ATCC BAA-1116).